A 490-amino-acid chain; its full sequence is Homoserine O-acetyltransferase (490 aa).

The region spanning 47-355 (NAILVCHALT…DYGHDAFLLE (309 aa)) is the AB hydrolase-1 domain. The active-site Nucleophile is the serine 152. Arginine 222 lines the substrate pocket. Residues aspartate 316 and histidine 349 contribute to the active site. Position 350 (aspartate 350) interacts with substrate. 2 consecutive CBS domains span residues 376-436 (MKTD…LEDV) and 437-490 (MTKD…ISSY).

The protein belongs to the AB hydrolase superfamily. MetX family. Homodimer.

The protein localises to the cytoplasm. The enzyme catalyses L-homoserine + acetyl-CoA = O-acetyl-L-homoserine + CoA. It functions in the pathway amino-acid biosynthesis; L-methionine biosynthesis via de novo pathway; O-acetyl-L-homoserine from L-homoserine: step 1/1. Functionally, transfers an acetyl group from acetyl-CoA to L-homoserine, forming acetyl-L-homoserine. This chain is Homoserine O-acetyltransferase, found in Methanobrevibacter ruminantium (strain ATCC 35063 / DSM 1093 / JCM 13430 / OCM 146 / M1) (Methanobacterium ruminantium).